The following is a 300-amino-acid chain: Ribonuclease HIII (300 aa).

The 218-residue stretch at 83–300 folds into the RNase H type-2 domain; sequence IPIIGSDEVG…THKAQALLTK (218 aa). D89, E90, and D194 together coordinate a divalent metal cation.

The protein belongs to the RNase HII family. RnhC subfamily. The cofactor is Mn(2+). Mg(2+) is required as a cofactor.

The protein resides in the cytoplasm. It catalyses the reaction Endonucleolytic cleavage to 5'-phosphomonoester.. Functionally, endonuclease that specifically degrades the RNA of RNA-DNA hybrids. The chain is Ribonuclease HIII from Streptococcus pyogenes serotype M2 (strain MGAS10270).